The following is a 93-amino-acid chain: Acylphosphatase (93 aa).

One can recognise an Acylphosphatase-like domain in the interval 4-91 (TLHLVIHGRV…PAGTGFRVAA (88 aa)). Residues arginine 19 and asparagine 37 contribute to the active site.

This sequence belongs to the acylphosphatase family.

The enzyme catalyses an acyl phosphate + H2O = a carboxylate + phosphate + H(+). The polypeptide is Acylphosphatase (acyP) (Azorhizobium caulinodans (strain ATCC 43989 / DSM 5975 / JCM 20966 / LMG 6465 / NBRC 14845 / NCIMB 13405 / ORS 571)).